Reading from the N-terminus, the 265-residue chain is Lipopolysaccharide core heptose(I) kinase WaaP (265 aa).

Asp-162 is a catalytic residue.

Belongs to the protein kinase superfamily. KdkA/RfaP family. Mg(2+) serves as cofactor.

The enzyme catalyses an L-alpha-D-Hep-(1-&gt;3)-L-alpha-D-Hep-(1-&gt;5)-[alpha-Kdo-(2-&gt;4)]-alpha-Kdo-(2-&gt;6)-lipid A + ATP = an L-alpha-D-Hep-(1-&gt;3)-4-O-phospho-L-alpha-D-Hep-(1-&gt;5)-[alpha-Kdo-(2-&gt;4)]-alpha-Kdo-(2-&gt;6)-lipid A + ADP + H(+). It carries out the reaction L-alpha-D-Hep-(1-&gt;3)-L-alpha-D-Hep-(1-&gt;5)-[alpha-Kdo-(2-&gt;4)]-alpha-Kdo-(2-&gt;6)-lipid A (E. coli) + ATP = L-alpha-D-Hep-(1-&gt;3)-4-O-phospho-L-alpha-D-Hep-(1-&gt;5)-[alpha-Kdo-(2-&gt;4)]-alpha-Kdo-(2-&gt;6)-lipid A (E. coli) + ADP + H(+). Its pathway is bacterial outer membrane biogenesis; LPS core biosynthesis. Its function is as follows. Kinase involved in the biosynthesis of the core oligosaccharide region of lipopolysaccharide (LPS). Catalyzes the phosphorylation of heptose I (HepI), the first heptose added to the Kdo2-lipid A module. The polypeptide is Lipopolysaccharide core heptose(I) kinase WaaP (Escherichia coli (strain K12)).